A 427-amino-acid chain; its full sequence is Mitochondrial distribution and morphology protein 10 (427 aa).

Low complexity predominate over residues 393–414; it reads SSYANSQATAGAQGSSGGPPTS. The tract at residues 393-427 is disordered; the sequence is SSYANSQATAGAQGSSGGPPTSYWRGVGVSVSYSS.

The protein belongs to the MDM10 family. As to quaternary structure, component of the ER-mitochondria encounter structure (ERMES) or MDM complex, composed of mmm1, mdm10, mdm12 and mdm34. Associates with the mitochondrial outer membrane sorting assembly machinery SAM(core) complex.

It is found in the mitochondrion outer membrane. Component of the ERMES/MDM complex, which serves as a molecular tether to connect the endoplasmic reticulum and mitochondria. Components of this complex are involved in the control of mitochondrial shape and protein biogenesis and may function in phospholipid exchange. mdm10 is involved in the late assembly steps of the general translocase of the mitochondrial outer membrane (TOM complex). Functions in the tom40-specific route of the assembly of outer membrane beta-barrel proteins, including the association of tom40 with the receptor tom22 and small TOM proteins. Can associate with the SAM(core) complex as well as the mdm12-mmm1 complex, both involved in late steps of the major beta-barrel assembly pathway, that is responsible for biogenesis of all outer membrane beta-barrel proteins. May act as a switch that shuttles between both complexes and channels precursor proteins into the tom40-specific pathway. Plays a role in mitochondrial morphology and in the inheritance of mitochondria. This is Mitochondrial distribution and morphology protein 10 (mdmB) from Emericella nidulans (strain FGSC A4 / ATCC 38163 / CBS 112.46 / NRRL 194 / M139) (Aspergillus nidulans).